The chain runs to 280 residues: MKFKEVRNTIKKMNITDIKICGINEYFMSMKLLDVEVVIMRSNGFVNITRLCNLEGKDFNDWKQLESSRRLLNTLKDNNKLHDPIINIRHTRIKINGEYVSQLLLDYVIPWISPYVATRVSILMRYYRRCVALNIETEKDIDHSQELQNQISKIDEVYDRSIKDISNRFKEIETSYYSKLSTYLLTKAERVLEKDYSMEQDIDNNEDIRTDEMIAAIEAEIEENNRRYLSIISGIRKQHAEDRINISKIMLSGDSFNEIIVKIRDYIETTAKPAVANNYE.

Positions 26 to 127 constitute a KilA-N domain; the sequence is YFMSMKLLDV…TRVSILMRYY (102 aa).

This is an uncharacterized protein from Vertebrata (FPV).